Reading from the N-terminus, the 157-residue chain is Ribosome maturation factor RimP (157 aa).

The protein belongs to the RimP family.

The protein resides in the cytoplasm. In terms of biological role, required for maturation of 30S ribosomal subunits. The sequence is that of Ribosome maturation factor RimP from Enterococcus faecalis (strain ATCC 700802 / V583).